The following is a 296-amino-acid chain: Endonuclease 5 (296 aa).

Positions 1–20 are cleaved as a signal peptide; sequence MRLWIVSVLVLTHLVHGALC. A divalent metal cation-binding residues include W21 and H26. 21–26 provides a ligand contact to substrate; the sequence is WGKDGH. C30 and C62 are disulfide-bonded. The a divalent metal cation site is built by D66 and H81. Substrate contacts are provided by residues 66 to 72, 81 to 84, and 91 to 96; these read DEIKKLS, HYVN, and NYEYCR. Disulfide bonds link C90–C243, C98–C108, and C223–C230. Positions 115 and 133 each coordinate substrate. N-linked (GlcNAc...) asparagine glycosylation is present at N115. The N-linked (GlcNAc...) asparagine glycan is linked to N134. Residues H144, D148, and H154 each contribute to the a divalent metal cation site. The segment at 144–193 is substrate binding; that stretch reads HYMGDVHQPLHTGFLGDLGGNTIIVNWYHNKSNLHHVWDNMIIDSALETY. An N-linked (GlcNAc...) asparagine glycan is attached at N173. Residues H178 and D182 each contribute to the a divalent metal cation site. N195 carries N-linked (GlcNAc...) asparagine glycosylation. The propeptide at 281–296 is removed in mature form; that stretch reads ATLNRIFSAKPKLAGL.

This sequence belongs to the nuclease type I family. As to quaternary structure, monomer. Requires Zn(2+) as cofactor.

The catalysed reaction is Endonucleolytic cleavage to 5'-phosphomononucleotide and 5'-phosphooligonucleotide end-products.. In terms of biological role, hydrolyzes, with low efficiency, only single-stranded DNA and RNA without apparent specificity for bases. Endonuclease that recognizes and cleaves some mismatches with high efficiency, including heteroduplex double-stranded DNA; mostly efficient on T/G, A/G and G/G mismatches, less efficient for T/T and poorly efficient for C/C, A/A, T/C and A/C. This chain is Endonuclease 5, found in Arabidopsis thaliana (Mouse-ear cress).